Reading from the N-terminus, the 551-residue chain is Preprotein translocase subunit SCY1, chloroplastic (551 aa).

The N-terminal 67 residues, 1-67 (MITVSEVSSY…WNLGLVINSR (67 aa)), are a transit peptide targeting the chloroplast. 10 helical membrane passes run 142-162 (FLKLLGFLALSRLGIYIPLGG), 192-212 (LGICSLGIVPFINAQIVFQLL), 241-261 (ASVGFAIVQAIGQVFYLRPYV), 268-288 (WVVSSVTLLTLGSVLTTYIGE), 295-315 (LGNGTSLLIFTSIISYLPASF), 328-348 (YTGLGTIVVSFLLLVLGIVYV), 382-402 (SAGVMPIIFSTSSLALPATLA), 415-435 (FALTPGGSFYLPTNILLIAFF), 482-502 (VLGSAFLAVLAAGPAVVEQIT), and 503-523 (HLTAFRGFAGTSVLILVGCAT).

The protein belongs to the SecY/SEC61-alpha family. In terms of assembly, part of the Sec protein translocation apparatus. Interacts with SECE1, ALB3 and probably with SECA1.

The protein resides in the plastid. Its subcellular location is the chloroplast thylakoid membrane. In terms of biological role, involved in protein export. Probably interacts with other proteins to allow the translocation of proteins across the chloroplast thylakoid membranes. Required for normal greening during embryogenesis. Central subunit of the protein translocation channel SecYE. Consists of two halves formed by TMs 1-5 and 6-10. These two domains form a lateral gate at the front which open onto the bilayer between TMs 2 and 7, and are clamped together by SecE at the back. The channel is closed by both a pore ring composed of hydrophobic SecY resides and a short helix (helix 2A) on the extracellular side of the membrane which forms a plug. In Arabidopsis thaliana (Mouse-ear cress), this protein is Preprotein translocase subunit SCY1, chloroplastic (SCY1).